Reading from the N-terminus, the 147-residue chain is D-aminoacyl-tRNA deacylase (147 aa).

The short motif at Gly136–Pro137 is the Gly-cisPro motif, important for rejection of L-amino acids element.

It belongs to the DTD family. In terms of assembly, homodimer.

It localises to the cytoplasm. The enzyme catalyses glycyl-tRNA(Ala) + H2O = tRNA(Ala) + glycine + H(+). It catalyses the reaction a D-aminoacyl-tRNA + H2O = a tRNA + a D-alpha-amino acid + H(+). An aminoacyl-tRNA editing enzyme that deacylates mischarged D-aminoacyl-tRNAs. Also deacylates mischarged glycyl-tRNA(Ala), protecting cells against glycine mischarging by AlaRS. Acts via tRNA-based rather than protein-based catalysis; rejects L-amino acids rather than detecting D-amino acids in the active site. By recycling D-aminoacyl-tRNA to D-amino acids and free tRNA molecules, this enzyme counteracts the toxicity associated with the formation of D-aminoacyl-tRNA entities in vivo and helps enforce protein L-homochirality. The polypeptide is D-aminoacyl-tRNA deacylase (Streptococcus pyogenes serotype M6 (strain ATCC BAA-946 / MGAS10394)).